The following is a 635-amino-acid chain: Threonine--tRNA ligase (635 aa).

A TGS domain is found at 1 to 58; the sequence is MIRVICDNETFELPTGSTAADFASKIKNSHYFAGVVINDQIKDLSTTLSEGDVLKFVT. Positions 237-528 are catalytic; the sequence is DHRVLGTKLD…LIEHFKGRFP (292 aa). Zn(2+) is bound by residues Cys328, His379, and His505.

The protein belongs to the class-II aminoacyl-tRNA synthetase family. As to quaternary structure, homodimer. Zn(2+) serves as cofactor.

The protein resides in the cytoplasm. The catalysed reaction is tRNA(Thr) + L-threonine + ATP = L-threonyl-tRNA(Thr) + AMP + diphosphate + H(+). Its function is as follows. Catalyzes the attachment of threonine to tRNA(Thr) in a two-step reaction: L-threonine is first activated by ATP to form Thr-AMP and then transferred to the acceptor end of tRNA(Thr). Also edits incorrectly charged L-seryl-tRNA(Thr). The polypeptide is Threonine--tRNA ligase (Chlamydia felis (strain Fe/C-56) (Chlamydophila felis)).